A 100-amino-acid chain; its full sequence is Large ribosomal subunit protein uL23 (100 aa).

This sequence belongs to the universal ribosomal protein uL23 family. As to quaternary structure, part of the 50S ribosomal subunit. Contacts protein L29, and trigger factor when it is bound to the ribosome.

One of the early assembly proteins it binds 23S rRNA. One of the proteins that surrounds the polypeptide exit tunnel on the outside of the ribosome. Forms the main docking site for trigger factor binding to the ribosome. The sequence is that of Large ribosomal subunit protein uL23 from Corynebacterium aurimucosum (strain ATCC 700975 / DSM 44827 / CIP 107346 / CN-1) (Corynebacterium nigricans).